The primary structure comprises 228 residues: 7-cyano-7-deazaguanine synthase (228 aa).

16 to 26 (FSGGQDSTTCL) serves as a coordination point for ATP. The Zn(2+) site is built by Cys193, Cys201, Cys204, and Cys207.

The protein belongs to the QueC family. Zn(2+) is required as a cofactor.

It catalyses the reaction 7-carboxy-7-deazaguanine + NH4(+) + ATP = 7-cyano-7-deazaguanine + ADP + phosphate + H2O + H(+). It participates in purine metabolism; 7-cyano-7-deazaguanine biosynthesis. Its function is as follows. Catalyzes the ATP-dependent conversion of 7-carboxy-7-deazaguanine (CDG) to 7-cyano-7-deazaguanine (preQ(0)). The protein is 7-cyano-7-deazaguanine synthase of Pasteurella multocida (strain Pm70).